Here is an 815-residue protein sequence, read N- to C-terminus: Translation initiation factor IF-2 (815 aa).

Residues valine 153–lysine 176 are compositionally biased toward basic and acidic residues. A disordered region spans residues valine 153–glutamate 219. Residues lysine 191–arginine 209 show a composition bias toward basic residues. Residues alanine 315–glutamate 482 enclose the tr-type G domain. The segment at glycine 324–threonine 331 is G1. Glycine 324–threonine 331 contributes to the GTP binding site. Residues glycine 349–histidine 353 are G2. A G3 region spans residues aspartate 370–glycine 373. Residues aspartate 370–histidine 374 and asparagine 424–aspartate 427 contribute to the GTP site. The segment at asparagine 424–aspartate 427 is G4. The tract at residues serine 460 to histidine 462 is G5.

It belongs to the TRAFAC class translation factor GTPase superfamily. Classic translation factor GTPase family. IF-2 subfamily.

The protein resides in the cytoplasm. Functionally, one of the essential components for the initiation of protein synthesis. Protects formylmethionyl-tRNA from spontaneous hydrolysis and promotes its binding to the 30S ribosomal subunits. Also involved in the hydrolysis of GTP during the formation of the 70S ribosomal complex. In Vesicomyosocius okutanii subsp. Calyptogena okutanii (strain HA), this protein is Translation initiation factor IF-2.